We begin with the raw amino-acid sequence, 617 residues long: V-type proton ATPase catalytic subunit A (617 aa).

Phosphothreonine is present on threonine 136. Residue 250–257 (GAFGCGKT) coordinates ATP. The residue at position 384 (serine 384) is a Phosphoserine; by AMPK.

The protein belongs to the ATPase alpha/beta chains family. As to quaternary structure, V-ATPase is a heteromultimeric enzyme made up of two complexes: the ATP-hydrolytic V1 complex and the proton translocation V0 complex. The V1 complex consists of three catalytic AB heterodimers that form a heterohexamer, three peripheral stalks each consisting of EG heterodimers, one central rotor including subunits D and F, and the regulatory subunits C and H. The proton translocation complex V0 consists of the proton transport subunit a, a ring of proteolipid subunits c9c'', rotary subunit d, subunits e and f, and the accessory subunits ATP6AP1/Ac45 and ATP6AP2/PRR. Interacts with the V0 complex V-ATPase subunit a4 ATP6V0A4. Interacts with WFS1. Interacts with alpha-crystallin B chain/CRYAB and with MTOR, forming a ternary complex. Phosphorylation at Ser-384 by AMPK down-regulates its enzyme activity.

It is found in the cytoplasm. The protein resides in the cytosol. The protein localises to the cytoplasmic vesicle. It localises to the secretory vesicle. Its subcellular location is the clathrin-coated vesicle membrane. It is found in the lysosome. It catalyses the reaction ATP + H2O + 4 H(+)(in) = ADP + phosphate + 5 H(+)(out). With respect to regulation, ATP hydrolysis occurs at the interface between the nucleotide-binding domains of subunits A and B. ATP hydrolysis triggers a conformational change in the subunits D and F, which induces a shift of subunit d. The c-ring is subsequently rotated and results in a continuous proton translocation across the membrane. In terms of biological role, catalytic subunit of the V1 complex of vacuolar(H+)-ATPase (V-ATPase), a multisubunit enzyme composed of a peripheral complex (V1) that hydrolyzes ATP and a membrane integral complex (V0) that translocates protons. V-ATPase is responsible for acidifying and maintaining the pH of intracellular compartments and in some cell types, is targeted to the plasma membrane, where it is responsible for acidifying the extracellular environment. In aerobic conditions, involved in intracellular iron homeostasis, thus triggering the activity of Fe(2+) prolyl hydroxylase (PHD) enzymes, and leading to HIF1A hydroxylation and subsequent proteasomal degradation. May play a role in neurite development and synaptic connectivity. The protein is V-type proton ATPase catalytic subunit A (ATP6V1A) of Sus scrofa (Pig).